Here is a 256-residue protein sequence, read N- to C-terminus: Enkurin (256 aa).

Residues 48–92 (TMGPAKLEVPSPKDFLKKHSKEKTLPPKKKFDRHEPKKPPVPLRT) form a disordered region. A compositionally biased stretch (basic and acidic residues) spans 61 to 72 (DFLKKHSKEKTL). An SH3-binding motif is present at residues 83 to 89 (PKKPPVP). In terms of domain architecture, Enkurin spans 160–252 (KRNEEVKKAQ…VLEKHKIIYI (93 aa)). In terms of domain architecture, IQ spans 176 to 187 (IQENLRKAAMKR).

Microtubule inner protein component of sperm flagellar doublet microtubules. Binds calmodulin via its IQ domain. Interacts with TRPC1, TRPC2, TRPC5, but not TRPC3. Interacts with CFAP45.

It is found in the cytoplasm. It localises to the cytoskeleton. The protein resides in the cilium axoneme. Its subcellular location is the flagellum axoneme. Adapter that functions to localize a calcium-sensitive signal transduction machinery in sperm to a calcium-permeable ion channel. Microtubule inner protein (MIP) part of the dynein-decorated doublet microtubules (DMTs) in cilia axoneme, which is required for motile cilia beating. The sequence is that of Enkurin (ENKUR) from Sus scrofa (Pig).